We begin with the raw amino-acid sequence, 331 residues long: MRCSQREVFVKREEPTNPEWGKPPSQRTADEYIRHSFVILDKPRGPSSHEVAAWVKKILGVERAGHAGTLDPKVSGVLPIAVAEGTKVLMALSRSDKVYVAVAKFHGDVDEERLRAVLREFQGEIYQKPPLRSAVKRQLRTRRVFSLELLELEGRYAVIKMHVEAGTYARKIIHDIGEVLGVGANMRELRRVAVTCFTEDEAVTLQDVADAYYIWKKYGDDTYLRSVLLPIEEIARHLPKIWVRDSAVDAVCHGAPLAAPGISKFEVPFSKGDIVAMFTLKGELVGIGRALVDSEEVKKMERGAVVRTDRVVMRRGTYPAMWKKGQRAAKT.

Residues 1 to 15 show a composition bias toward basic and acidic residues; sequence MRCSQREVFVKREEP. The interval 1–27 is disordered; the sequence is MRCSQREVFVKREEPTNPEWGKPPSQR. Residue Asp-71 is the Nucleophile of the active site. The PUA domain occupies 238–313; sequence LPKIWVRDSA…AVVRTDRVVM (76 aa).

This sequence belongs to the pseudouridine synthase TruB family. Type 2 subfamily.

It catalyses the reaction uridine(55) in tRNA = pseudouridine(55) in tRNA. Functionally, could be responsible for synthesis of pseudouridine from uracil-55 in the psi GC loop of transfer RNAs. This is Probable tRNA pseudouridine synthase B from Pyrobaculum arsenaticum (strain DSM 13514 / JCM 11321 / PZ6).